An 89-amino-acid polypeptide reads, in one-letter code: Small ribosomal subunit protein uS17 (89 aa).

Belongs to the universal ribosomal protein uS17 family. Part of the 30S ribosomal subunit.

One of the primary rRNA binding proteins, it binds specifically to the 5'-end of 16S ribosomal RNA. The protein is Small ribosomal subunit protein uS17 of Azoarcus sp. (strain BH72).